Here is an 842-residue protein sequence, read N- to C-terminus: ATP-binding cassette sub-family B member 6 (842 aa).

The Lumenal segment spans residues 1–26; that stretch reads MVTVGNYCETEGPAGPAWTQNGLSPC. The required for the lysosomal targeting stretch occupies residues 1-205; the sequence is MVTVGNYCET…SGGLFILGLW (205 aa). The interval 1-236 is required for ATPase activity; sequence MVTVGNYCET…GNQGRSTDRR (236 aa). An intrachain disulfide couples Cys-8 to Cys-26. The helical transmembrane segment at 27–47 threads the bilayer; that stretch reads FFFTLVPSTLLTLGVLALVLV. Topologically, residues 48-72 are cytoplasmic; the sequence is LPRRRREVPAGPEELSWAAGPRVAP. Residues 73 to 93 traverse the membrane as a helical segment; sequence YVLQLFLATLQMALPLAGLAG. Topologically, residues 94 to 106 are lumenal; sequence RVGTARGVRLPGY. The chain crosses the membrane as a helical span at residues 107–127; it reads LLLASVLESLASVCGLWLLVV. Topologically, residues 128-147 are cytoplasmic; sequence ERSQARQSLAMGVWMKFRHS. A helical transmembrane segment spans residues 148-168; that stretch reads LGLLLLWTVTFAAENLALVSW. At 169–185 the chain is on the lumenal side; that stretch reads NSPQWWWARADLGQQVQ. A helical membrane pass occupies residues 186-206; that stretch reads FGLWVLRYVTSGGLFILGLWA. Residues 207 to 263 are Cytoplasmic-facing; that stretch reads PGLRPQSYTLHVHEEDQDVGGNQGRSTDRRSTWRDLGRKLRLLSSYLWPRGSPSLQL. A helical membrane pass occupies residues 264 to 284; it reads IVLICLGLMGLERALNVLVPI. Positions 265–556 constitute an ABC transmembrane type-1 domain; it reads VLICLGLMGL…FGTYYRMIQT (292 aa). Residues 285 to 291 lie on the Lumenal side of the membrane; the sequence is FYRDIVN. A helical membrane pass occupies residues 292–312; the sequence is LLTAKAPWSSLAWTVTTYVFL. Residues 313–375 are Cytoplasmic-facing; sequence KFLQGGGTGS…TGEVLRIVDR (63 aa). Residues 376–396 form a helical membrane-spanning segment; the sequence is GTSSVTGLLSYLVFSIIPTLA. Asp-397 is a topological domain (lumenal). A helical transmembrane segment spans residues 398 to 418; that stretch reads IIIGIIYFSMFFNAWFGLIVF. The Cytoplasmic segment spans residues 419–499; that stretch reads LCMSLYLILT…STASLVVLNQ (81 aa). A helical membrane pass occupies residues 500 to 520; the sequence is TQNLVIGLGLLAGSLLCAYFV. Residues 521-529 are Lumenal-facing; the sequence is SEQKLQVGD. The chain crosses the membrane as a helical span at residues 530–550; sequence FVLFGTYITQLYMPLNWFGTY. The Cytoplasmic segment spans residues 551–842; it reads YRMIQTNFID…PEESKPQDTA (292 aa). In terms of domain architecture, ABC transporter spans 590–824; that stretch reads IEFENVHFSY…GGVYAEMWQL (235 aa). ATP contacts are provided by residues Tyr-599 and 623 to 634; that span reads GPSGAGKSTILR.

It belongs to the ABC transporter superfamily. ABCB family. Heavy Metal importer (TC 3.A.1.210) subfamily. As to quaternary structure, homodimer. In terms of processing, N-glycosylated.

The protein localises to the cell membrane. It is found in the mitochondrion outer membrane. Its subcellular location is the endoplasmic reticulum membrane. The protein resides in the golgi apparatus membrane. It localises to the endosome membrane. The protein localises to the lysosome membrane. It is found in the late endosome membrane. Its subcellular location is the early endosome membrane. The protein resides in the secreted. It localises to the extracellular exosome. The protein localises to the mitochondrion. It is found in the endosome. Its subcellular location is the multivesicular body membrane. The protein resides in the melanosome membrane. It carries out the reaction coproporphyrin III(in) + ATP + H2O = coproporphyrin III(out) + ADP + phosphate + H(+). It catalyses the reaction coproporphyrinogen III(in) + ATP + H2O = coproporphyrinogen III(out) + ADP + phosphate + H(+). The enzyme catalyses heme b(in) + ATP + H2O = heme b(out) + ADP + phosphate + H(+). The catalysed reaction is pheophorbide a(in) + ATP + H2O = pheophorbide a(out) + ADP + phosphate + H(+). It carries out the reaction protoporphyrin IX(in) + ATP + H2O = protoporphyrin IX(out) + ADP + phosphate + H(+). It catalyses the reaction coproporphyrin I(in) + ATP + H2O = coproporphyrin I(out) + ADP + phosphate + H(+). The enzyme catalyses uroporphyrin I(in) + ATP + H2O = uroporphyrin I(out) + ADP + phosphate + H(+). The catalysed reaction is uroporphyrin III(in) + ATP + H2O = uroporphyrin III(out) + ADP + phosphate + H(+). Its function is as follows. ATP-dependent transporter that catalyzes the transport of a broad-spectrum of porphyrins from the cytoplasm to the extracellular space through the plasma membrane or into the vesicle lumen. May also function as an ATP-dependent importer of porphyrins from the cytoplasm into the mitochondria, in turn may participate in the de novo heme biosynthesis regulation and in the coordination of heme and iron homeostasis during phenylhydrazine stress. May play a key role in the early steps of melanogenesis producing PMEL amyloid fibrils. In vitro, it confers to cells a resistance to toxic metal such as arsenic and cadmium and against chemotherapeutics agent such as 5-fluorouracil, SN-38 and vincristin. In addition may play a role in the transition metal homeostasis. The polypeptide is ATP-binding cassette sub-family B member 6 (Mus musculus (Mouse)).